Reading from the N-terminus, the 331-residue chain is Dof zinc finger protein DOF1.1 (331 aa).

The Dof-type zinc-finger motif lies at 77-131 (LKCPRCDSSNTKFCYYNNYNLTQPRHFCKGCRRYWTQGGALRNVPVGGGCRRNNK). Zn(2+) is bound by residues Cys-79, Cys-82, Cys-104, and Cys-107. Disordered regions lie at residues 121–166 (PVGG…TNHQ) and 291–331 (EEQP…NDLL). Over residues 135–160 (NGNLKSSSSSSKQSSSVNAQSPSSGQ) the composition is skewed to low complexity. A compositionally biased stretch (polar residues) spans 305-316 (GLTSPGNQTNQY).

Interacts with OBF4. In terms of tissue distribution, expressed in the vasculature (mainly in the phloem and associated cell files) of cotyledons, leaves, roots, flower stalks and petals. The PEAR proteins (e.g. DOF2.4, DOF5.1, DOF3.2, DOF1.1, DOF5.6 and DOF5.3) form a short-range concentration gradient that peaks at protophloem sieve elements (PSE).

It localises to the nucleus. Functionally, transcription factor that binds specifically to a 5'-AA[AG]G-3' consensus core sequence. Enhances the DNA binding of OBF transcription factors to OCS elements. Involved in the regulation of root development. The PEAR proteins (e.g. DOF2.4, DOF5.1, DOF3.2, DOF1.1, DOF5.6 and DOF5.3) activate gene expression that promotes radial growth of protophloem sieve elements. Element of a regulatory network controlling indole glucosinolates (IGS) biosynthesis, probably by inducing the expression of accurate genes (e.g. CYP83B1). Promotes apical dominance. This chain is Dof zinc finger protein DOF1.1, found in Arabidopsis thaliana (Mouse-ear cress).